The sequence spans 77 residues: Sec-independent protein translocase protein TatA (77 aa).

A helical membrane pass occupies residues 1 to 21; the sequence is MGSFSIWHWLIVLVIVMLVFG. Residues 40–77 are disordered; that stretch reads KDGMKEGNTDEPATPTPAKELRDSTTIDVEAKEKSRQQ. Residues 58-77 are compositionally biased toward basic and acidic residues; that stretch reads KELRDSTTIDVEAKEKSRQQ.

The protein belongs to the TatA/E family. As to quaternary structure, the Tat system comprises two distinct complexes: a TatABC complex, containing multiple copies of TatA, TatB and TatC subunits, and a separate TatA complex, containing only TatA subunits. Substrates initially bind to the TatABC complex, which probably triggers association of the separate TatA complex to form the active translocon.

Its subcellular location is the cell inner membrane. Part of the twin-arginine translocation (Tat) system that transports large folded proteins containing a characteristic twin-arginine motif in their signal peptide across membranes. TatA could form the protein-conducting channel of the Tat system. The protein is Sec-independent protein translocase protein TatA of Cupriavidus metallidurans (strain ATCC 43123 / DSM 2839 / NBRC 102507 / CH34) (Ralstonia metallidurans).